Here is a 249-residue protein sequence, read N- to C-terminus: Probable transcriptional regulatory protein A1S_1496 (249 aa).

Belongs to the TACO1 family.

The protein resides in the cytoplasm. The sequence is that of Probable transcriptional regulatory protein A1S_1496 from Acinetobacter baumannii (strain ATCC 17978 / DSM 105126 / CIP 53.77 / LMG 1025 / NCDC KC755 / 5377).